The sequence spans 327 residues: Mitochondrial carnitine carrier (327 aa).

Residues 1 to 11 (MSSDTSLSESS) are compositionally biased toward low complexity. The interval 1 to 29 (MSSDTSLSESSLLKEESGSLTKSRPPIKS) is disordered. 6 consecutive transmembrane segments (helical) span residues 33–49 (RENIKSFVAGGVGGVCA), 107–123 (LGVTPIFAVSFWGYDVG), 141–162 (MGQMAAAGFISAIPTTLVTAPT), 196–212 (GSLATLARDGPGSALYF), 244–260 (LAGGIAGMSMWLAVFPI), and 293–313 (FFPGLGPALLRSFPANAATFL). Solcar repeat units follow at residues 33 to 126 (RENI…GKKL), 139 to 221 (LTMG…SKNY), and 237 to 321 (VNIL…THSL).

The protein belongs to the mitochondrial carrier (TC 2.A.29) family.

It is found in the mitochondrion inner membrane. Functionally, transports carnitine, acetylcarnitine, propionylcarnitine and to a much lower extent medium- and long-chain acylcarnitines. The sequence is that of Mitochondrial carnitine carrier (CRC1) from Saccharomyces cerevisiae (strain ATCC 204508 / S288c) (Baker's yeast).